Here is a 576-residue protein sequence, read N- to C-terminus: Rop guanine nucleotide exchange factor 13 (576 aa).

Positions 119-485 (KSCYFAYVTE…QLTQNPELAM (367 aa)) constitute a PRONE domain. Residues 557–570 (KTTYLESLGTTRSP) are compositionally biased toward polar residues. Residues 557–576 (KTTYLESLGTTRSPTAGRYS) are disordered.

In terms of assembly, interacts with PRK6. Specifically expressed in mature flowers.

Guanine-nucleotide exchange factor (GEF) that acts as an activator of Rop (Rho of plants) GTPases by promoting the exchange of GDP for GTP. The chain is Rop guanine nucleotide exchange factor 13 from Arabidopsis thaliana (Mouse-ear cress).